The sequence spans 347 residues: 5-deoxyribose 1-phosphate isomerase (347 aa).

Substrate is bound by residues 48–50 (RGA), R91, and Q198. The Proton donor role is filled by D239. 249 to 250 (NK) lines the substrate pocket.

The protein belongs to the EIF-2B alpha/beta/delta subunits family. DrdI subfamily.

The enzyme catalyses 5-deoxy-alpha-D-ribose 1-phosphate = 5-deoxy-D-ribulose 1-phosphate. Its pathway is carbohydrate degradation. Catalyzes the isomerization of 5-deoxy-alpha-D-ribose 1-phosphate to 5-deoxy-D-ribulose 1-phosphate, as part of a 5-deoxyribose salvage pathway that recycles this toxic radical SAM enzyme by-product to mainstream metabolites. The sequence is that of 5-deoxyribose 1-phosphate isomerase from Bacillus cereus (strain ATCC 14579 / DSM 31 / CCUG 7414 / JCM 2152 / NBRC 15305 / NCIMB 9373 / NCTC 2599 / NRRL B-3711).